Consider the following 210-residue polypeptide: A-kinase-interacting protein 1 (210 aa).

Disordered regions lie at residues 58–80 (HLEK…ERPP) and 136–162 (QRKD…EASQ).

As to quaternary structure, interacts with PRKACA and RELA. Expressed at high levels in adult heart and at lower levels in brain, testis, ovary and skeletal muscle. Up-regulated in some breast cancer cell lines. Isoform 1 and isoform 3 are expressed in fetal brain.

The protein resides in the nucleus. Functionally, enhances NF-kappa-B transcriptional activity by regulating the nuclear localization of the NF-kappa-B subunit RELA and promoting the phosphorylation of RELA by PRKACA. Regulates the effect of the cAMP-dependent protein kinase signaling pathway on the NF-kappa-B activation cascade. The chain is A-kinase-interacting protein 1 (AKIP1) from Homo sapiens (Human).